A 141-amino-acid chain; its full sequence is Nucleoside triphosphatase NudI (141 aa).

Residues M1–L141 enclose the Nudix hydrolase domain. A Nudix box motif is present at residues G38–G59.

The protein belongs to the Nudix hydrolase family. NudI subfamily. Monomer. Mg(2+) is required as a cofactor.

It carries out the reaction a ribonucleoside 5'-triphosphate + H2O = a ribonucleoside 5'-phosphate + diphosphate + H(+). The catalysed reaction is a 2'-deoxyribonucleoside 5'-triphosphate + H2O = a 2'-deoxyribonucleoside 5'-phosphate + diphosphate + H(+). It catalyses the reaction dUTP + H2O = dUMP + diphosphate + H(+). The enzyme catalyses dTTP + H2O = dTMP + diphosphate + H(+). It carries out the reaction dCTP + H2O = dCMP + diphosphate + H(+). Functionally, catalyzes the hydrolysis of nucleoside triphosphates, with a preference for pyrimidine deoxynucleoside triphosphates (dUTP, dTTP and dCTP). This is Nucleoside triphosphatase NudI from Salmonella heidelberg (strain SL476).